The sequence spans 34 residues: Cytochrome c oxidase polypeptide 2A (34 aa).

Position 1 is an N-formylmethionine (M1). The helical transmembrane segment at 4 to 34 (KPKGALAVILVLTLTILVFWLGVYAVFFARG) threads the bilayer.

Its subcellular location is the cell membrane. It catalyses the reaction 4 Fe(II)-[cytochrome c] + O2 + 8 H(+)(in) = 4 Fe(III)-[cytochrome c] + 2 H2O + 4 H(+)(out). In Thermus thermophilus (strain ATCC 27634 / DSM 579 / HB8), this protein is Cytochrome c oxidase polypeptide 2A (cbaD).